The sequence spans 165 residues: Destrin (165 aa).

Ala-2 carries the post-translational modification N-acetylalanine. The ADF-H domain maps to 4–153; it reads GVQVADEVCR…NRACIAEKLG (150 aa). Residues 30–34 carry the Nuclear localization signal motif; the sequence is KKRKK.

Belongs to the actin-binding proteins ADF family.

Functionally, actin-depolymerizing protein. Severs actin filaments (F-actin) and binds to actin monomers (G-actin). Acts in a pH-independent manner. The protein is Destrin (DSTN) of Gallus gallus (Chicken).